The chain runs to 148 residues: Arginine repressor (148 aa).

This sequence belongs to the ArgR family.

It localises to the cytoplasm. Its pathway is amino-acid biosynthesis; L-arginine biosynthesis [regulation]. In terms of biological role, regulates arginine biosynthesis genes. The sequence is that of Arginine repressor from Chloroherpeton thalassium (strain ATCC 35110 / GB-78).